A 130-amino-acid chain; its full sequence is S-adenosylmethionine decarboxylase proenzyme (130 aa).

The active-site Schiff-base intermediate with substrate; via pyruvic acid is the Ser63. The residue at position 63 (Ser63) is a Pyruvic acid (Ser); by autocatalysis. His68 (proton acceptor; for processing activity) is an active-site residue. The active-site Proton donor; for catalytic activity is Cys83.

Belongs to the prokaryotic AdoMetDC family. Type 1 subfamily. In terms of assembly, heterotetramer of two alpha and two beta chains arranged as a dimer of alpha/beta heterodimers. It depends on pyruvate as a cofactor. Post-translationally, is synthesized initially as an inactive proenzyme. Formation of the active enzyme involves a self-maturation process in which the active site pyruvoyl group is generated from an internal serine residue via an autocatalytic post-translational modification. Two non-identical subunits are generated from the proenzyme in this reaction, and the pyruvate is formed at the N-terminus of the alpha chain, which is derived from the carboxyl end of the proenzyme. The post-translation cleavage follows an unusual pathway, termed non-hydrolytic serinolysis, in which the side chain hydroxyl group of the serine supplies its oxygen atom to form the C-terminus of the beta chain, while the remainder of the serine residue undergoes an oxidative deamination to produce ammonia and the pyruvoyl group blocking the N-terminus of the alpha chain.

The catalysed reaction is S-adenosyl-L-methionine + H(+) = S-adenosyl 3-(methylsulfanyl)propylamine + CO2. Its pathway is amine and polyamine biosynthesis; S-adenosylmethioninamine biosynthesis; S-adenosylmethioninamine from S-adenosyl-L-methionine: step 1/1. Catalyzes the decarboxylation of S-adenosylmethionine to S-adenosylmethioninamine (dcAdoMet), the propylamine donor required for the synthesis of the polyamines spermine and spermidine from the diamine putrescine. The sequence is that of S-adenosylmethionine decarboxylase proenzyme from Thermosipho melanesiensis (strain DSM 12029 / CIP 104789 / BI429).